We begin with the raw amino-acid sequence, 327 residues long: Aspartate carbamoyltransferase catalytic subunit (327 aa).

R67 and T68 together coordinate carbamoyl phosphate. K95 contacts L-aspartate. R117, H145, and Q148 together coordinate carbamoyl phosphate. The L-aspartate site is built by R178 and R232. Positions 273 and 274 each coordinate carbamoyl phosphate.

The protein belongs to the aspartate/ornithine carbamoyltransferase superfamily. ATCase family. As to quaternary structure, heterododecamer (2C3:3R2) of six catalytic PyrB chains organized as two trimers (C3), and six regulatory PyrI chains organized as three dimers (R2).

The enzyme catalyses carbamoyl phosphate + L-aspartate = N-carbamoyl-L-aspartate + phosphate + H(+). The protein operates within pyrimidine metabolism; UMP biosynthesis via de novo pathway; (S)-dihydroorotate from bicarbonate: step 2/3. In terms of biological role, catalyzes the condensation of carbamoyl phosphate and aspartate to form carbamoyl aspartate and inorganic phosphate, the committed step in the de novo pyrimidine nucleotide biosynthesis pathway. This is Aspartate carbamoyltransferase catalytic subunit from Parvibaculum lavamentivorans (strain DS-1 / DSM 13023 / NCIMB 13966).